The primary structure comprises 81 residues: uncharacterized protein (81 aa).

The next 2 membrane-spanning stretches (helical) occupy residues 10-30 (FFVLLFIFTILFLIVVAFLLL) and 56-76 (VLYLFAFGILAVLFLLIAFAI).

Its subcellular location is the host membrane. This is an uncharacterized protein from Acidianus two-tailed virus (ATV).